A 336-amino-acid chain; its full sequence is Holliday junction branch migration complex subunit RuvB (336 aa).

The interval 4-184 is large ATPase domain (RuvB-L); the sequence is SDRLISSQSI…FGIVQRLEYY (181 aa). ATP-binding positions include Ile23, Arg24, Gly65, Lys68, Thr69, Thr70, 131 to 133, Arg174, Tyr184, and Arg221; that span reads EDY. Thr69 serves as a coordination point for Mg(2+). Residues 185–255 form a small ATPAse domain (RuvB-S) region; it reads SVDSLTQIVA…MAQQALEMLE (71 aa). Residues 258–336 are head domain (RuvB-H); it reads QHGFDLMDRK…HFGFSAIEQE (79 aa). The DNA site is built by Arg313 and Arg318.

The protein belongs to the RuvB family. Homohexamer. Forms an RuvA(8)-RuvB(12)-Holliday junction (HJ) complex. HJ DNA is sandwiched between 2 RuvA tetramers; dsDNA enters through RuvA and exits via RuvB. An RuvB hexamer assembles on each DNA strand where it exits the tetramer. Each RuvB hexamer is contacted by two RuvA subunits (via domain III) on 2 adjacent RuvB subunits; this complex drives branch migration. In the full resolvosome a probable DNA-RuvA(4)-RuvB(12)-RuvC(2) complex forms which resolves the HJ.

Its subcellular location is the cytoplasm. It carries out the reaction ATP + H2O = ADP + phosphate + H(+). Its function is as follows. The RuvA-RuvB-RuvC complex processes Holliday junction (HJ) DNA during genetic recombination and DNA repair, while the RuvA-RuvB complex plays an important role in the rescue of blocked DNA replication forks via replication fork reversal (RFR). RuvA specifically binds to HJ cruciform DNA, conferring on it an open structure. The RuvB hexamer acts as an ATP-dependent pump, pulling dsDNA into and through the RuvAB complex. RuvB forms 2 homohexamers on either side of HJ DNA bound by 1 or 2 RuvA tetramers; 4 subunits per hexamer contact DNA at a time. Coordinated motions by a converter formed by DNA-disengaged RuvB subunits stimulates ATP hydrolysis and nucleotide exchange. Immobilization of the converter enables RuvB to convert the ATP-contained energy into a lever motion, pulling 2 nucleotides of DNA out of the RuvA tetramer per ATP hydrolyzed, thus driving DNA branch migration. The RuvB motors rotate together with the DNA substrate, which together with the progressing nucleotide cycle form the mechanistic basis for DNA recombination by continuous HJ branch migration. Branch migration allows RuvC to scan DNA until it finds its consensus sequence, where it cleaves and resolves cruciform DNA. The protein is Holliday junction branch migration complex subunit RuvB of Legionella pneumophila subsp. pneumophila (strain Philadelphia 1 / ATCC 33152 / DSM 7513).